The following is a 289-amino-acid chain: Ribosomal RNA small subunit methyltransferase A (289 aa).

S-adenosyl-L-methionine contacts are provided by Asn21, Leu23, Gly48, Glu69, Asp94, and Asn120.

Belongs to the class I-like SAM-binding methyltransferase superfamily. rRNA adenine N(6)-methyltransferase family. RsmA subfamily.

The protein resides in the cytoplasm. The catalysed reaction is adenosine(1518)/adenosine(1519) in 16S rRNA + 4 S-adenosyl-L-methionine = N(6)-dimethyladenosine(1518)/N(6)-dimethyladenosine(1519) in 16S rRNA + 4 S-adenosyl-L-homocysteine + 4 H(+). Specifically dimethylates two adjacent adenosines (A1518 and A1519) in the loop of a conserved hairpin near the 3'-end of 16S rRNA in the 30S particle. May play a critical role in biogenesis of 30S subunits. This chain is Ribosomal RNA small subunit methyltransferase A, found in Haemophilus ducreyi (strain 35000HP / ATCC 700724).